The sequence spans 420 residues: Serine/threonine-protein phosphatase 4 regulatory subunit 2-A (420 aa).

The interval 157 to 420 (GNTSAFPDRN…ETADDNMEQD (264 aa)) is disordered. The segment covering 182 to 195 (SLSSNVATNGLPDS) has biased composition (polar residues). Residues 196–210 (TESKEQASEQSERTV) show a composition bias toward basic and acidic residues. Low complexity predominate over residues 212–224 (ESSASEAESHSGA). Residues 229–250 (HRDDEDATHAETHEAKRLKFDK) are compositionally biased toward basic and acidic residues. Residues 251–266 (EEEEEEDDEEEDEDGD) are compositionally biased toward acidic residues. Residues 267–276 (EIKKELDEPH) are compositionally biased toward basic and acidic residues. Positions 278–296 (PCTSVAESSSDVPQSSTDV) are enriched in polar residues. Positions 318–332 (GVDRSTSEDSPDPSH) are enriched in basic and acidic residues. Acidic residues predominate over residues 346 to 364 (AEEEEEEESAEAQETEETN). The span at 368-394 (SSSSNNSSDEGVSSAETPSASPSSSTE) shows a compositional bias: low complexity. Positions 411–420 (ETADDNMEQD) are enriched in acidic residues.

This sequence belongs to the PPP4R2 family. In terms of assembly, serine/threonine-protein phosphatase 4 (PP4) occurs in different assemblies of the catalytic and one or more regulatory subunits.

Its function is as follows. Regulatory subunit of serine/threonine-protein phosphatase 4 (PP4C). This chain is Serine/threonine-protein phosphatase 4 regulatory subunit 2-A (ppp4r2a), found in Danio rerio (Zebrafish).